Here is a 1182-residue protein sequence, read N- to C-terminus: Myosin IC heavy chain (1182 aa).

The Myosin motor domain occupies 15–698 (EGLDDMTLLS…MLFSLEETRE (684 aa)). 109–116 (GESGAGKT) contributes to the ATP binding site. The interval 571-593 (AAELVATLMKSTPHYIRTIKPND) is actin-binding. A TH1 domain is found at 774–957 (RNRFSMISVR…QFHIASGLPA (184 aa)). Disordered stretches follow at residues 999–1052 (KPAP…PAPG) and 1064–1103 (SKPL…PAGQ). Over residues 1013 to 1042 (KKPAPTAPGGAPMMKKPAPAPGGAPMMKKP) the composition is skewed to low complexity. A compositionally biased stretch (pro residues) spans 1081 to 1092 (PTAPGGPAPAGA). Positions 1123–1182 (PPPQQYIALYEYDAMQPDELTFKENDVINLIKKVDADWWQGELVRTKQIGMLPSNYVQQI) constitute an SH3 domain.

The protein belongs to the TRAFAC class myosin-kinesin ATPase superfamily. Myosin family. In terms of assembly, myosin I heavy chain is single-headed. Dimer of a heavy and a light chain. Inability to self-assemble into filaments.

The protein localises to the cell projection. It is found in the lamellipodium. In terms of biological role, myosin is a protein that binds to actin and has ATPase activity that is activated by actin. Involved in the process of phagocytosis and appears to support streaming behavior. This is Myosin IC heavy chain (myoC) from Dictyostelium discoideum (Social amoeba).